A 401-amino-acid chain; its full sequence is 1-deoxy-D-xylulose 5-phosphate reductoisomerase (401 aa).

Residues T11, G12, S13, I14, R38, N39, and N125 each coordinate NADPH. K126 contributes to the 1-deoxy-D-xylulose 5-phosphate binding site. Position 127 (E127) interacts with NADPH. A Mn(2+)-binding site is contributed by D151. Residues S152, E153, S179, and H202 each contribute to the 1-deoxy-D-xylulose 5-phosphate site. E153 provides a ligand contact to Mn(2+). NADPH is bound at residue G208. S215, N220, K221, and E224 together coordinate 1-deoxy-D-xylulose 5-phosphate. E224 contributes to the Mn(2+) binding site.

It belongs to the DXR family. Mg(2+) is required as a cofactor. The cofactor is Mn(2+).

The catalysed reaction is 2-C-methyl-D-erythritol 4-phosphate + NADP(+) = 1-deoxy-D-xylulose 5-phosphate + NADPH + H(+). Its pathway is isoprenoid biosynthesis; isopentenyl diphosphate biosynthesis via DXP pathway; isopentenyl diphosphate from 1-deoxy-D-xylulose 5-phosphate: step 1/6. Its function is as follows. Catalyzes the NADPH-dependent rearrangement and reduction of 1-deoxy-D-xylulose-5-phosphate (DXP) to 2-C-methyl-D-erythritol 4-phosphate (MEP). This chain is 1-deoxy-D-xylulose 5-phosphate reductoisomerase, found in Paraburkholderia phytofirmans (strain DSM 17436 / LMG 22146 / PsJN) (Burkholderia phytofirmans).